Consider the following 504-residue polypeptide: Topoisomerase I damage affected protein 11 (504 aa).

The tract at residues R32–Q62 is disordered. Residues A179 to D231 adopt a coiled-coil conformation. Residue T236 is modified to Phosphothreonine. A phosphoserine mark is found at S244 and S286. 3 disordered regions span residues L252–S306, W332–R377, and D400–F504. Positions E257–P287 are enriched in polar residues. Over residues I290–D301 the composition is skewed to basic and acidic residues. Polar residues-rich tracts occupy residues W332–D359 and K368–R377. Residues T403–K421 show a composition bias toward basic and acidic residues. Residues T470–S479 are compositionally biased toward basic residues. Residues D491 to F504 are compositionally biased toward polar residues.

It belongs to the TDA11 family.

The protein resides in the cytoplasm. This is Topoisomerase I damage affected protein 11 (TDA11) from Saccharomyces cerevisiae (strain ATCC 204508 / S288c) (Baker's yeast).